The following is a 241-amino-acid chain: 2-C-methyl-D-erythritol 4-phosphate cytidylyltransferase (241 aa).

It belongs to the IspD/TarI cytidylyltransferase family. IspD subfamily.

The catalysed reaction is 2-C-methyl-D-erythritol 4-phosphate + CTP + H(+) = 4-CDP-2-C-methyl-D-erythritol + diphosphate. Its pathway is isoprenoid biosynthesis; isopentenyl diphosphate biosynthesis via DXP pathway; isopentenyl diphosphate from 1-deoxy-D-xylulose 5-phosphate: step 2/6. Functionally, catalyzes the formation of 4-diphosphocytidyl-2-C-methyl-D-erythritol from CTP and 2-C-methyl-D-erythritol 4-phosphate (MEP). This is 2-C-methyl-D-erythritol 4-phosphate cytidylyltransferase from Alkaliphilus metalliredigens (strain QYMF).